The primary structure comprises 552 residues: Hydroxylamine reductase (552 aa).

Residues C5, C8, C20, and C27 each contribute to the [2Fe-2S] cluster site. H251, E275, C319, C407, C435, C460, E494, and K496 together coordinate hybrid [4Fe-2O-2S] cluster. At C407 the chain carries Cysteine persulfide.

The protein belongs to the HCP family. [2Fe-2S] cluster is required as a cofactor. Hybrid [4Fe-2O-2S] cluster serves as cofactor.

It is found in the cytoplasm. It catalyses the reaction A + NH4(+) + H2O = hydroxylamine + AH2 + H(+). Functionally, catalyzes the reduction of hydroxylamine to form NH(3) and H(2)O. The protein is Hydroxylamine reductase of Escherichia coli (strain UTI89 / UPEC).